Consider the following 118-residue polypeptide: Large ribosomal subunit protein bL20 (118 aa).

Belongs to the bacterial ribosomal protein bL20 family.

Its function is as follows. Binds directly to 23S ribosomal RNA and is necessary for the in vitro assembly process of the 50S ribosomal subunit. It is not involved in the protein synthesizing functions of that subunit. The chain is Large ribosomal subunit protein bL20 from Hydrogenovibrio crunogenus (strain DSM 25203 / XCL-2) (Thiomicrospira crunogena).